Consider the following 559-residue polypeptide: Formate--tetrahydrofolate ligase (559 aa).

Residue Thr-68–Ser-75 coordinates ATP.

Belongs to the formate--tetrahydrofolate ligase family.

It catalyses the reaction (6S)-5,6,7,8-tetrahydrofolate + formate + ATP = (6R)-10-formyltetrahydrofolate + ADP + phosphate. It functions in the pathway one-carbon metabolism; tetrahydrofolate interconversion. The sequence is that of Formate--tetrahydrofolate ligase from Clostridium tetani (strain Massachusetts / E88).